Reading from the N-terminus, the 240-residue chain is 4-hydroxy-tetrahydrodipicolinate reductase (240 aa).

NAD(+) contacts are provided by residues 79–81 (ATT) and 103–106 (SANM). H135 acts as the Proton donor/acceptor in catalysis. H136 provides a ligand contact to (S)-2,3,4,5-tetrahydrodipicolinate. The Proton donor role is filled by K139. Residue 145–146 (GT) participates in (S)-2,3,4,5-tetrahydrodipicolinate binding.

It belongs to the DapB family.

It localises to the cytoplasm. It catalyses the reaction (S)-2,3,4,5-tetrahydrodipicolinate + NAD(+) + H2O = (2S,4S)-4-hydroxy-2,3,4,5-tetrahydrodipicolinate + NADH + H(+). The enzyme catalyses (S)-2,3,4,5-tetrahydrodipicolinate + NADP(+) + H2O = (2S,4S)-4-hydroxy-2,3,4,5-tetrahydrodipicolinate + NADPH + H(+). The protein operates within amino-acid biosynthesis; L-lysine biosynthesis via DAP pathway; (S)-tetrahydrodipicolinate from L-aspartate: step 4/4. Functionally, catalyzes the conversion of 4-hydroxy-tetrahydrodipicolinate (HTPA) to tetrahydrodipicolinate. This Staphylococcus aureus (strain MSSA476) protein is 4-hydroxy-tetrahydrodipicolinate reductase.